Here is a 122-residue protein sequence, read N- to C-terminus: Holo-[acyl-carrier-protein] synthase (122 aa).

Mg(2+)-binding residues include aspartate 8 and glutamate 58.

This sequence belongs to the P-Pant transferase superfamily. AcpS family. Requires Mg(2+) as cofactor.

The protein localises to the cytoplasm. The enzyme catalyses apo-[ACP] + CoA = holo-[ACP] + adenosine 3',5'-bisphosphate + H(+). In terms of biological role, transfers the 4'-phosphopantetheine moiety from coenzyme A to a Ser of acyl-carrier-protein. In Levilactobacillus brevis (strain ATCC 367 / BCRC 12310 / CIP 105137 / JCM 1170 / LMG 11437 / NCIMB 947 / NCTC 947) (Lactobacillus brevis), this protein is Holo-[acyl-carrier-protein] synthase.